The sequence spans 466 residues: tRNA-2-methylthio-N(6)-dimethylallyladenosine synthase (466 aa).

Positions 22–139 (RRYYVWTVGC…VVALAPNPIY (118 aa)) constitute an MTTase N-terminal domain. Positions 31, 67, 101, 166, 170, and 173 each coordinate [4Fe-4S] cluster. Residues 152-386 (SHPPVSVHVP…EQLQEQIATE (235 aa)) form the Radical SAM core domain. The TRAM domain occupies 389–449 (ARFLGQTVEV…PWSLQGVPQL (61 aa)).

Belongs to the methylthiotransferase family. MiaB subfamily. In terms of assembly, monomer. [4Fe-4S] cluster is required as a cofactor.

It localises to the cytoplasm. The enzyme catalyses N(6)-dimethylallyladenosine(37) in tRNA + (sulfur carrier)-SH + AH2 + 2 S-adenosyl-L-methionine = 2-methylsulfanyl-N(6)-dimethylallyladenosine(37) in tRNA + (sulfur carrier)-H + 5'-deoxyadenosine + L-methionine + A + S-adenosyl-L-homocysteine + 2 H(+). In terms of biological role, catalyzes the methylthiolation of N6-(dimethylallyl)adenosine (i(6)A), leading to the formation of 2-methylthio-N6-(dimethylallyl)adenosine (ms(2)i(6)A) at position 37 in tRNAs that read codons beginning with uridine. The protein is tRNA-2-methylthio-N(6)-dimethylallyladenosine synthase of Chloroflexus aurantiacus (strain ATCC 29366 / DSM 635 / J-10-fl).